The chain runs to 418 residues: ATP-dependent RNA helicase RhlB (418 aa).

The Q motif motif lies at Thr9 to Ala37. A Helicase ATP-binding domain is found at Leu40–Ile219. ATP is bound at residue Ala53–Thr60. The DEAD box motif lies at Asp165–Asp168. A Helicase C-terminal domain is found at Lys243 to Leu390.

The protein belongs to the DEAD box helicase family. RhlB subfamily. Component of the RNA degradosome, which is a multiprotein complex involved in RNA processing and mRNA degradation.

It localises to the cytoplasm. The enzyme catalyses ATP + H2O = ADP + phosphate + H(+). Its function is as follows. DEAD-box RNA helicase involved in RNA degradation. Has RNA-dependent ATPase activity and unwinds double-stranded RNA. The chain is ATP-dependent RNA helicase RhlB from Psychromonas ingrahamii (strain DSM 17664 / CCUG 51855 / 37).